Consider the following 494-residue polypeptide: Probable malate:quinone oxidoreductase 3 (494 aa).

Belongs to the MQO family. FAD is required as a cofactor.

The catalysed reaction is (S)-malate + a quinone = a quinol + oxaloacetate. Its pathway is carbohydrate metabolism; tricarboxylic acid cycle; oxaloacetate from (S)-malate (quinone route): step 1/1. The polypeptide is Probable malate:quinone oxidoreductase 3 (Staphylococcus epidermidis (strain ATCC 35984 / DSM 28319 / BCRC 17069 / CCUG 31568 / BM 3577 / RP62A)).